The chain runs to 317 residues: MGDRLTGLHAPTTEAGAASADHTAVVRPGFRDTAKAYVEVTKPISVGLLAFTAAAMMVVAGATHPVSGWLFVQALLAVVLACAGANAVSCYVDRDMDAQMGRTRRRPVPSGRISPPARALYWGLFLFVASLGLAWNLNPIAWITLWGGMLGYVVVYSLWLKRRSVWNIVIGGVSGGMPALFGWAAVTGEISLLPVLIAALVVLWIPNHIWSLAIFYREEYARVKVPMLPVVYELRRALNWLLLTVVLMVVFSVLIYFVGDWGLVYLATALVMGAAALALSVHIYRNPERRKAWVLFKFSSPYLAVLFLSMMVDVWLR.

Helical transmembrane passes span 43-63 (PISVGLLAFTAAAMMVVAGAT), 65-85 (PVSGWLFVQALLAVVLACAGA), 119-139 (ALYWGLFLFVASLGLAWNLNP), 140-160 (IAWITLWGGMLGYVVVYSLWL), 168-188 (IVIGGVSGGMPALFGWAAVTG), 195-215 (VLIAALVVLWIPNHIWSLAIF), 238-258 (LNWLLLTVVLMVVFSVLIYFV), 261-281 (WGLVYLATALVMGAAALALSV), and 292-312 (AWVLFKFSSPYLAVLFLSMMV).

This sequence belongs to the UbiA prenyltransferase family. Protoheme IX farnesyltransferase subfamily. Interacts with CtaA.

The protein localises to the cell membrane. It catalyses the reaction heme b + (2E,6E)-farnesyl diphosphate + H2O = Fe(II)-heme o + diphosphate. Its pathway is porphyrin-containing compound metabolism; heme O biosynthesis; heme O from protoheme: step 1/1. Its function is as follows. Converts heme B (protoheme IX) to heme O by substitution of the vinyl group on carbon 2 of heme B porphyrin ring with a hydroxyethyl farnesyl side group. The chain is Protoheme IX farnesyltransferase from Desulforudis audaxviator (strain MP104C).